Reading from the N-terminus, the 248-residue chain is Pathogenesis-related thaumatin-like protein 3.4 (248 aa).

Positions 1–25 are cleaved as a signal peptide; it reads MARAILWVLLTVMAVSLLLHAGVEG. Intrachain disulfides connect Cys-34–Cys-227, Cys-75–Cys-85, Cys-90–Cys-96, Cys-141–Cys-216, Cys-146–Cys-199, Cys-154–Cys-164, Cys-168–Cys-177, and Cys-178–Cys-186. Residue Asn-235 is glycosylated (N-linked (GlcNAc...) asparagine).

This sequence belongs to the thaumatin family. Mainly expressed in male and female strobili, and, at lower levels, in roots of seedlings and saplings.

Functionally, may be involved in disease resistance. The chain is Pathogenesis-related thaumatin-like protein 3.4 from Cryptomeria japonica (Japanese cedar).